The sequence spans 214 residues: Shikimate kinase (214 aa).

35 to 40 (GAGKST) provides a ligand contact to ATP. Ser39 serves as a coordination point for Mg(2+). Substrate contacts are provided by Asp57, Arg81, and Gly103. Arg141 contacts ATP. Arg160 lines the substrate pocket.

Belongs to the shikimate kinase family. Monomer. Requires Mg(2+) as cofactor.

Its subcellular location is the cytoplasm. It carries out the reaction shikimate + ATP = 3-phosphoshikimate + ADP + H(+). It participates in metabolic intermediate biosynthesis; chorismate biosynthesis; chorismate from D-erythrose 4-phosphate and phosphoenolpyruvate: step 5/7. Its function is as follows. Catalyzes the specific phosphorylation of the 3-hydroxyl group of shikimic acid using ATP as a cosubstrate. The protein is Shikimate kinase of Nitrobacter winogradskyi (strain ATCC 25391 / DSM 10237 / CIP 104748 / NCIMB 11846 / Nb-255).